A 75-amino-acid polypeptide reads, in one-letter code: Large ribosomal subunit protein bL31 (75 aa).

The protein belongs to the bacterial ribosomal protein bL31 family. Type A subfamily. As to quaternary structure, part of the 50S ribosomal subunit.

Binds the 23S rRNA. The sequence is that of Large ribosomal subunit protein bL31 from Rhodopseudomonas palustris (strain BisB18).